Consider the following 339-residue polypeptide: Uroporphyrinogen decarboxylase (339 aa).

Residues 23–27 (RQAGR), Asp-72, Tyr-147, Thr-202, and His-315 each bind substrate.

This sequence belongs to the uroporphyrinogen decarboxylase family. Homodimer.

It is found in the cytoplasm. The enzyme catalyses uroporphyrinogen III + 4 H(+) = coproporphyrinogen III + 4 CO2. It functions in the pathway porphyrin-containing compound metabolism; protoporphyrin-IX biosynthesis; coproporphyrinogen-III from 5-aminolevulinate: step 4/4. In terms of biological role, catalyzes the decarboxylation of four acetate groups of uroporphyrinogen-III to yield coproporphyrinogen-III. The polypeptide is Uroporphyrinogen decarboxylase (Geotalea uraniireducens (strain Rf4) (Geobacter uraniireducens)).